The primary structure comprises 281 residues: ATP synthase gamma chain (281 aa).

It belongs to the ATPase gamma chain family. F-type ATPases have 2 components, CF(1) - the catalytic core - and CF(0) - the membrane proton channel. CF(1) has five subunits: alpha(3), beta(3), gamma(1), delta(1), epsilon(1). CF(0) has three main subunits: a, b and c.

Its subcellular location is the cell membrane. Its function is as follows. Produces ATP from ADP in the presence of a proton gradient across the membrane. The gamma chain is believed to be important in regulating ATPase activity and the flow of protons through the CF(0) complex. The sequence is that of ATP synthase gamma chain from Mesoplasma florum (strain ATCC 33453 / NBRC 100688 / NCTC 11704 / L1) (Acholeplasma florum).